Reading from the N-terminus, the 89-residue chain is Small ribosomal subunit protein uS15 (89 aa).

The protein belongs to the universal ribosomal protein uS15 family. As to quaternary structure, part of the 30S ribosomal subunit. Forms a bridge to the 50S subunit in the 70S ribosome, contacting the 23S rRNA.

Its function is as follows. One of the primary rRNA binding proteins, it binds directly to 16S rRNA where it helps nucleate assembly of the platform of the 30S subunit by binding and bridging several RNA helices of the 16S rRNA. Forms an intersubunit bridge (bridge B4) with the 23S rRNA of the 50S subunit in the ribosome. The chain is Small ribosomal subunit protein uS15 from Jannaschia sp. (strain CCS1).